The chain runs to 346 residues: Protein RecA (346 aa).

Residue 65 to 72 coordinates ATP; it reads GPESSGKT.

The protein belongs to the RecA family.

It is found in the cytoplasm. In terms of biological role, can catalyze the hydrolysis of ATP in the presence of single-stranded DNA, the ATP-dependent uptake of single-stranded DNA by duplex DNA, and the ATP-dependent hybridization of homologous single-stranded DNAs. It interacts with LexA causing its activation and leading to its autocatalytic cleavage. In Enterococcus mundtii, this protein is Protein RecA.